Reading from the N-terminus, the 269-residue chain is MRPPVPSAPLALWVLGCFSLLLWLWALCTACHRKRAQRQQTGLQDSLVPVEMPLLRQTHLCSLSKSDTRLHELHRGPRSSIAPRPASMDLLHPRWLEMSRGSTRSQVPNSAFPPRQLPRAPPAAPATAPSTSSEATYSNVGLAAIPRASLAASPVVWAGTQLTISCARLGPGAEYACIQKHKGTEQGCQELQQKAKVIPATQMDVLYSRVCKPKRRDPRPVTDQLNLQDGRTSLPLGSDVEYEAINLRGQDMKQGPLENVYESIKEMGL.

The Extracellular portion of the chain corresponds to 1–7 (MRPPVPS). A helical; Signal-anchor for type III membrane protein membrane pass occupies residues 8 to 28 (APLALWVLGCFSLLLWLWALC). S-palmitoyl cysteine attachment occurs at residues cysteine 28 and cysteine 31. At 29 to 269 (TACHRKRAQR…VYESIKEMGL (241 aa)) the chain is on the cytoplasmic side. The interval 102–133 (STRSQVPNSAFPPRQLPRAPPAAPATAPSTSS) is disordered. Residues 115–124 (RQLPRAPPAA) are compositionally biased toward pro residues. A phosphotyrosine mark is found at tyrosine 137, tyrosine 175, and tyrosine 207. The interval 137–140 (YSNV) is interaction with GRB2. Interaction with CSK stretches follow at residues 175–178 (YACI) and 207–210 (YSRV). Residues tyrosine 242 and tyrosine 261 each carry the phosphotyrosine; by LYN or LCK modification. The segment at 242-245 (YEAI) is interaction with LCK and PIK3R1. The segment at 261 to 264 (YESI) is interaction with LCK, PLCG2 and PIK3R1. Position 263 is a phosphoserine (serine 263).

When phosphorylated in response to TCR stimulation and/or CD4 costimulation, interacts with LCK, CSK, FYN, PTPN11/SHP2, GRB2, PIK3R1 and GRAP2. When phosphorylated in response to BCR activation, interacts with LYN, PIK3R1, PLCG2 and GRB2. In terms of processing, palmitoylation of Cys-28 and Cys-31 is required for raft targeting. Post-translationally, phosphorylated on tyrosines upon TCR activation and/or CD4 coreceptor stimulation, or upon BCR stimulation; which leads to the recruitment of SH2-containing proteins. As to expression, expressed in spleen and lung. Present in primary B-cells and peripheral T-cells (at protein level).

It localises to the cell membrane. In terms of biological role, involved in BCR (B-cell antigen receptor)-mediated signaling in B-cells and TCR (T-cell antigen receptor)-mediated T-cell signaling in T-cells. In absence of TCR signaling, may be involved in CD4-mediated inhibition of T-cell activation. Couples activation of these receptors and their associated kinases with distal intracellular events such as calcium mobilization or MAPK activation through the recruitment of PLCG2, GRB2, GRAP2, and other signaling molecules. This Mus musculus (Mouse) protein is Lck-interacting transmembrane adapter 1 (Lime1).